Here is a 476-residue protein sequence, read N- to C-terminus: Aspartyl/glutamyl-tRNA(Asn/Gln) amidotransferase subunit B (476 aa).

The protein belongs to the GatB/GatE family. GatB subfamily. In terms of assembly, heterotrimer of A, B and C subunits.

The enzyme catalyses L-glutamyl-tRNA(Gln) + L-glutamine + ATP + H2O = L-glutaminyl-tRNA(Gln) + L-glutamate + ADP + phosphate + H(+). The catalysed reaction is L-aspartyl-tRNA(Asn) + L-glutamine + ATP + H2O = L-asparaginyl-tRNA(Asn) + L-glutamate + ADP + phosphate + 2 H(+). Its function is as follows. Allows the formation of correctly charged Asn-tRNA(Asn) or Gln-tRNA(Gln) through the transamidation of misacylated Asp-tRNA(Asn) or Glu-tRNA(Gln) in organisms which lack either or both of asparaginyl-tRNA or glutaminyl-tRNA synthetases. The reaction takes place in the presence of glutamine and ATP through an activated phospho-Asp-tRNA(Asn) or phospho-Glu-tRNA(Gln). This chain is Aspartyl/glutamyl-tRNA(Asn/Gln) amidotransferase subunit B, found in Clostridium botulinum (strain Langeland / NCTC 10281 / Type F).